The chain runs to 163 residues: Peptide methionine sulfoxide reductase MsrA (163 aa).

Cysteine 10 is an active-site residue.

Belongs to the MsrA Met sulfoxide reductase family.

The catalysed reaction is L-methionyl-[protein] + [thioredoxin]-disulfide + H2O = L-methionyl-(S)-S-oxide-[protein] + [thioredoxin]-dithiol. It catalyses the reaction [thioredoxin]-disulfide + L-methionine + H2O = L-methionine (S)-S-oxide + [thioredoxin]-dithiol. Its function is as follows. Has an important function as a repair enzyme for proteins that have been inactivated by oxidation. Catalyzes the reversible oxidation-reduction of methionine sulfoxide in proteins to methionine. This chain is Peptide methionine sulfoxide reductase MsrA, found in Vesicomyosocius okutanii subsp. Calyptogena okutanii (strain HA).